A 581-amino-acid chain; its full sequence is Lipoprotein LpqB (581 aa).

Positions 1 to 23 are cleaved as a signal peptide; that stretch reads MRNHVSRYLTALIAVGCAATTAA. The N-palmitoyl cysteine moiety is linked to residue Cys-24. Cys-24 carries the S-diacylglycerol cysteine lipid modification.

It belongs to the LpqB lipoprotein family.

The protein localises to the cell membrane. This is Lipoprotein LpqB from Corynebacterium diphtheriae (strain ATCC 700971 / NCTC 13129 / Biotype gravis).